The chain runs to 201 residues: Ubiquitin-conjugating enzyme E2 E2 (201 aa).

A compositionally biased stretch (basic and acidic residues) spans 1 to 10; the sequence is MSTEAQRVDD. Residues 1–55 are disordered; that stretch reads MSTEAQRVDDSPSTSGGSSDGDQRESVQQEPEREQVQPKKKEGKISSKTAAKLST. The residue at position 2 (Ser2) is an N-acetylserine. Ser11, Ser15, Ser18, and Ser19 each carry phosphoserine. The segment covering 21–45 has biased composition (basic and acidic residues); it reads GDQRESVQQEPEREQVQPKKKEGKI. Low complexity predominate over residues 46–55; the sequence is SSKTAAKLST. The region spanning 55–201 is the UBC core domain; sequence TSAKRIQKEL…ARQWTKRYAT (147 aa). Cys139 (glycyl thioester intermediate) is an active-site residue.

This sequence belongs to the ubiquitin-conjugating enzyme family. Post-translationally, autoubiquitinated in vitro.

It carries out the reaction S-ubiquitinyl-[E1 ubiquitin-activating enzyme]-L-cysteine + [E2 ubiquitin-conjugating enzyme]-L-cysteine = [E1 ubiquitin-activating enzyme]-L-cysteine + S-ubiquitinyl-[E2 ubiquitin-conjugating enzyme]-L-cysteine.. The protein operates within protein modification; protein ubiquitination. Accepts ubiquitin from the E1 complex and catalyzes its covalent attachment to other proteins. In vitro catalyzes 'Lys-11'- and 'Lys-48'-, as well as 'Lys-63'-linked polyubiquitination. Catalyzes the ISGylation of influenza A virus NS1 protein. The protein is Ubiquitin-conjugating enzyme E2 E2 of Homo sapiens (Human).